Consider the following 208-residue polypeptide: Ribosomal RNA large subunit methyltransferase E (208 aa).

The S-adenosyl-L-methionine site is built by Gly63, Trp65, Asp83, Asp99, and Asp124. The active-site Proton acceptor is the Lys164.

This sequence belongs to the class I-like SAM-binding methyltransferase superfamily. RNA methyltransferase RlmE family.

Its subcellular location is the cytoplasm. The enzyme catalyses uridine(2552) in 23S rRNA + S-adenosyl-L-methionine = 2'-O-methyluridine(2552) in 23S rRNA + S-adenosyl-L-homocysteine + H(+). In terms of biological role, specifically methylates the uridine in position 2552 of 23S rRNA at the 2'-O position of the ribose in the fully assembled 50S ribosomal subunit. The protein is Ribosomal RNA large subunit methyltransferase E of Salmonella paratyphi A (strain ATCC 9150 / SARB42).